We begin with the raw amino-acid sequence, 133 residues long: Small ribosomal subunit protein uS15 (133 aa).

Belongs to the universal ribosomal protein uS15 family. As to quaternary structure, part of the 30S ribosomal subunit.

In Methanosphaera stadtmanae (strain ATCC 43021 / DSM 3091 / JCM 11832 / MCB-3), this protein is Small ribosomal subunit protein uS15.